The primary structure comprises 72 residues: ATP synthase subunit c (72 aa).

The next 2 membrane-spanning stretches (helical) occupy residues 4–24 (ALGA…GMGI) and 46–66 (LLFI…LIAF).

It belongs to the ATPase C chain family. F-type ATPases have 2 components, F(1) - the catalytic core - and F(0) - the membrane proton channel. F(1) has five subunits: alpha(3), beta(3), gamma(1), delta(1), epsilon(1). F(0) has three main subunits: a(1), b(2) and c(10-14). The alpha and beta chains form an alternating ring which encloses part of the gamma chain. F(1) is attached to F(0) by a central stalk formed by the gamma and epsilon chains, while a peripheral stalk is formed by the delta and b chains.

The protein localises to the cell membrane. In terms of biological role, f(1)F(0) ATP synthase produces ATP from ADP in the presence of a proton or sodium gradient. F-type ATPases consist of two structural domains, F(1) containing the extramembraneous catalytic core and F(0) containing the membrane proton channel, linked together by a central stalk and a peripheral stalk. During catalysis, ATP synthesis in the catalytic domain of F(1) is coupled via a rotary mechanism of the central stalk subunits to proton translocation. Functionally, key component of the F(0) channel; it plays a direct role in translocation across the membrane. A homomeric c-ring of between 10-14 subunits forms the central stalk rotor element with the F(1) delta and epsilon subunits. This chain is ATP synthase subunit c, found in Syntrophomonas wolfei subsp. wolfei (strain DSM 2245B / Goettingen).